The chain runs to 627 residues: MTLDISKYPTLALADKPEDLRLLPKETLTQLCDELRTYLLNSVSQSSGHLASGLGTVELTVALHYVYNTPFDQLVWDVGHQAYPHKILTGRRDRLSTIRQKDGLHPFPWREESEYDTLSVGHSSTSISAALGMAISAKKEGKNRKVVSVIGDGAITAGMAFEAMNHAGDIHNDMLVILNDNEMSISENVGALNNHLAQVLSGSLYTSIREGGKKVLSGVPPIKELVRRTEEHLKGMVVPGTMFEELGFNYIGPVDGHDVNELIKTLKNMRDLKGPQFLHIMTKKGKGYEPAEKDPIGYHGVPKFDPAHSSLPKSTSSKPTFSKIFGDFLCDMAAQDPKLMAITPAMREGSGMVRFSKEYPKQYFDVAIAEQHAVTLATGMAIAGDKPIVAIYSTFLQRGYDQLIHDVAIMDLPVMFAIDRAGLVGADGQTHQGAFDLSFMRCIPNMVIMAPSDENECRQMLYTGHQHTGPSAVRYPRGNGMGTEIQSEFTALEIGKGRIVRESKKAKDGSKVAILSFGTFLESALQTADAIDATVADMRFVKPLDEALIKQLAADHDVLVTIEENAIAGGAGAGVIEFLMQEKLLMPVLNLGLPDKFIAQGTQDELHEELGLDAKGIEKSISDYLAK.

Thiamine diphosphate contacts are provided by residues histidine 80 and 121 to 123 (GHS). Mg(2+) is bound at residue aspartate 152. Residues 153-154 (GA), asparagine 181, tyrosine 288, and glutamate 370 contribute to the thiamine diphosphate site. Asparagine 181 is a binding site for Mg(2+).

Belongs to the transketolase family. DXPS subfamily. As to quaternary structure, homodimer. The cofactor is Mg(2+). Thiamine diphosphate serves as cofactor.

The catalysed reaction is D-glyceraldehyde 3-phosphate + pyruvate + H(+) = 1-deoxy-D-xylulose 5-phosphate + CO2. Its pathway is metabolic intermediate biosynthesis; 1-deoxy-D-xylulose 5-phosphate biosynthesis; 1-deoxy-D-xylulose 5-phosphate from D-glyceraldehyde 3-phosphate and pyruvate: step 1/1. Functionally, catalyzes the acyloin condensation reaction between C atoms 2 and 3 of pyruvate and glyceraldehyde 3-phosphate to yield 1-deoxy-D-xylulose-5-phosphate (DXP). The chain is 1-deoxy-D-xylulose-5-phosphate synthase from Vibrio atlanticus (strain LGP32) (Vibrio splendidus (strain Mel32)).